Here is a 369-residue protein sequence, read N- to C-terminus: Outer membrane protein P2 (369 aa).

Positions 1–20 (MKKTLAALIVGAFAASAANA) are cleaved as a signal peptide.

This sequence belongs to the Gram-negative porin family. Homotrimer.

It localises to the cell outer membrane. Forms pores that allow passive diffusion of small molecules across the outer membrane. The polypeptide is Outer membrane protein P2 (ompP2) (Haemophilus influenzae).